Consider the following 414-residue polypeptide: F-box protein At3g26010 (414 aa).

An F-box domain is found at 5-52 (NRTIHLTDAIWTEILARLPLRIIARFKSVSKTWKSTIESVYFRRLFVS).

The sequence is that of F-box protein At3g26010 from Arabidopsis thaliana (Mouse-ear cress).